The sequence spans 143 residues: Large ribosomal subunit protein uL15 (143 aa).

It belongs to the universal ribosomal protein uL15 family. In terms of assembly, part of the 50S ribosomal subunit.

Binds to the 23S rRNA. This is Large ribosomal subunit protein uL15 from Methanococcus aeolicus (strain ATCC BAA-1280 / DSM 17508 / OCM 812 / Nankai-3).